A 96-amino-acid polypeptide reads, in one-letter code: MAKGQSLQDPFLNALRRERVPVSIYLVNGIKLQGQIESFDQFVILLKNTVSQMVYKHAISTVVPSRPVSHHSNTGTNQAGTNYSGGNATQQDDVAE.

Residues 9–68 enclose the Sm domain; the sequence is DPFLNALRRERVPVSIYLVNGIKLQGQIESFDQFVILLKNTVSQMVYKHAISTVVPSRPV. The segment at 64–96 is disordered; it reads PSRPVSHHSNTGTNQAGTNYSGGNATQQDDVAE. Residues 70 to 96 are compositionally biased toward polar residues; sequence HHSNTGTNQAGTNYSGGNATQQDDVAE.

This sequence belongs to the Hfq family. In terms of assembly, homohexamer.

Functionally, RNA chaperone that binds small regulatory RNA (sRNAs) and mRNAs to facilitate mRNA translational regulation in response to envelope stress, environmental stress and changes in metabolite concentrations. Also binds with high specificity to tRNAs. In Proteus mirabilis (strain HI4320), this protein is RNA-binding protein Hfq.